We begin with the raw amino-acid sequence, 947 residues long: Translation initiation factor IF-2 (947 aa).

The segment at 61-284 is disordered; it reads IQANQPAKNP…TAKNNKSHKI (224 aa). Over residues 151–169 the composition is skewed to basic and acidic residues; that stretch reads QIEKAKQKLQEIQKSREAL. Residues 175–188 show a composition bias toward low complexity; that stretch reads SNANNANSTNNANN. The span at 189 to 206 shows a compositional bias: basic and acidic residues; sequence AKKEISEVKKQEQEIKRH. Residues 207–218 are compositionally biased toward basic residues; the sequence is ENIKRRTGFRVI. A compositionally biased stretch (basic and acidic residues) spans 247-262; that stretch reads EDIKKEWQEKDKQEAK. A tr-type G domain is found at 446–615; it reads ERPPVVTIMG…LIQADIMELK (170 aa). Residues 455-462 form a G1 region; sequence GHVDHGKT. 455–462 contacts GTP; it reads GHVDHGKT. A G2 region spans residues 480-484; it reads GITQH. Residues 501–504 are G3; it reads DTPG. Residues 501–505 and 555–558 contribute to the GTP site; these read DTPGH and NKMD. Positions 555–558 are G4; the sequence is NKMD. Residues 591 to 593 form a G5 region; sequence SAK.

It belongs to the TRAFAC class translation factor GTPase superfamily. Classic translation factor GTPase family. IF-2 subfamily.

Its subcellular location is the cytoplasm. One of the essential components for the initiation of protein synthesis. Protects formylmethionyl-tRNA from spontaneous hydrolysis and promotes its binding to the 30S ribosomal subunits. Also involved in the hydrolysis of GTP during the formation of the 70S ribosomal complex. This is Translation initiation factor IF-2 from Helicobacter pylori (strain P12).